The following is a 440-amino-acid chain: Beta-1,3-galactosyl-O-glycosyl-glycoprotein beta-1,6-N-acetylglucosaminyltransferase 3 (440 aa).

The Cytoplasmic portion of the chain corresponds to 1-12 (MKMTGWKKKLCR). The chain crosses the membrane as a helical; Signal-anchor for type II membrane protein span at residues 13–30 (GHHLWALGCYSLLAVVAL). Residues 31–440 (RLSLRLKCDV…RHKAIYGTEL (410 aa)) are Lumenal-facing. Intrachain disulfides connect Cys73–Cys230, Cys164–Cys384, Cys185–Cys212, and Cys393–Cys425. The N-linked (GlcNAc...) asparagine glycan is linked to Asn108.

Belongs to the glycosyltransferase 14 family. In terms of processing, N-glycosylated.

The protein resides in the golgi apparatus membrane. It catalyses the reaction a 3-O-[beta-D-galactosyl-(1-&gt;3)-N-acetyl-alpha-D-galactosaminyl]-L-seryl-[protein] + UDP-N-acetyl-alpha-D-glucosamine = 3-O-{beta-D-galactosyl-(1-&gt;3)-[N-acetyl-beta-D-glucosaminyl-(1-&gt;6)]-N-acetyl-alpha-D-galactosaminyl}-L-seryl-[protein] + UDP + H(+). The catalysed reaction is a 3-O-[beta-D-galactosyl-(1-&gt;3)-N-acetyl-alpha-D-galactosaminyl]-L-threonyl-[protein] + UDP-N-acetyl-alpha-D-glucosamine = a 3-O-{beta-D-galactosyl-(1-&gt;3)-[N-acetyl-beta-D-glucosaminyl-(1-&gt;6)]-N-acetyl-alpha-D-galactosaminyl}-L-threonyl-[protein] + UDP + H(+). The enzyme catalyses a beta-D-Gal-(1-&gt;4)-beta-D-GlcNAc-(1-&gt;3)-beta-D-Gal-(1-&gt;4)-beta-D-GlcNAc derivative + UDP-N-acetyl-alpha-D-glucosamine = a beta-D-Gal-(1-&gt;4)-beta-D-GlcNAc-(1-&gt;3)-[beta-D-GlcNAc-(1-&gt;6)]-beta-D-Gal-(1-&gt;4)-N-acetyl-beta-D-glucosaminyl derivative + UDP + H(+). It carries out the reaction 3-O-[N-acetyl-beta-D-glucosaminyl-(1-&gt;3)-N-acetyl-alpha-D-galactosaminyl]-L-seryl-[protein] + UDP-N-acetyl-alpha-D-glucosamine = 3-O-[N-acetyl-beta-D-glucosaminyl-(1-&gt;3)-[N-acetyl-beta-D-glucosaminyl-(1-&gt;6)]-N-acetyl-alpha-D-galactosaminyl]-L-seryl-[protein] + UDP + H(+). It catalyses the reaction a 3-O-[N-acetyl-beta-D-glucosaminyl-(1-&gt;3)-N-acetyl-alpha-D-galactosaminyl]-L-threonyl-[protein] + UDP-N-acetyl-alpha-D-glucosamine = 3-O-[N-acetyl-beta-D-glucosaminyl-(1-&gt;3)-[N-acetyl-beta-D-glucosaminyl-(1-&gt;6)]-N-acetyl-alpha-D-galactosaminyl]-L-threonyl-[protein] + UDP + H(+). The protein operates within protein modification; protein glycosylation. In terms of biological role, glycosyltransferase that can synthesize all known mucin beta 6 N-acetylglucosaminides. Mediates core 2 and core 4 O-glycan branching, 2 important steps in mucin-type biosynthesis. Also has I-branching enzyme activity by converting linear into branched poly-N-acetyllactosaminoglycans, leading to introduce the blood group I antigen during embryonic development. This is Beta-1,3-galactosyl-O-glycosyl-glycoprotein beta-1,6-N-acetylglucosaminyltransferase 3 (GCNT3) from Bos mutus grunniens (Wild yak).